Reading from the N-terminus, the 351-residue chain is Major capsid protein (351 aa).

It belongs to the baculoviridae p39 family.

Its subcellular location is the virion. The sequence is that of Major capsid protein (P39) from Orgyia pseudotsugata (Douglas-fir tussock moth).